The chain runs to 557 residues: Dihydroxy-acid dehydratase (557 aa).

[2Fe-2S] cluster is bound at residue C50. A Mg(2+)-binding site is contributed by D82. [2Fe-2S] cluster is bound at residue C123. Mg(2+) contacts are provided by D124 and K125. The residue at position 125 (K125) is an N6-carboxylysine. C195 serves as a coordination point for [2Fe-2S] cluster. A Mg(2+)-binding site is contributed by E447. Residue S473 is the Proton acceptor of the active site.

Belongs to the IlvD/Edd family. Homodimer. The cofactor is [2Fe-2S] cluster. It depends on Mg(2+) as a cofactor.

It carries out the reaction (2R)-2,3-dihydroxy-3-methylbutanoate = 3-methyl-2-oxobutanoate + H2O. It catalyses the reaction (2R,3R)-2,3-dihydroxy-3-methylpentanoate = (S)-3-methyl-2-oxopentanoate + H2O. Its pathway is amino-acid biosynthesis; L-isoleucine biosynthesis; L-isoleucine from 2-oxobutanoate: step 3/4. The protein operates within amino-acid biosynthesis; L-valine biosynthesis; L-valine from pyruvate: step 3/4. Functionally, functions in the biosynthesis of branched-chain amino acids. Catalyzes the dehydration of (2R,3R)-2,3-dihydroxy-3-methylpentanoate (2,3-dihydroxy-3-methylvalerate) into 2-oxo-3-methylpentanoate (2-oxo-3-methylvalerate) and of (2R)-2,3-dihydroxy-3-methylbutanoate (2,3-dihydroxyisovalerate) into 2-oxo-3-methylbutanoate (2-oxoisovalerate), the penultimate precursor to L-isoleucine and L-valine, respectively. In Herminiimonas arsenicoxydans, this protein is Dihydroxy-acid dehydratase.